A 539-amino-acid polypeptide reads, in one-letter code: Chaperonin GroEL (539 aa).

Residues 29-32 (TLGP), 86-90 (DGTTT), Gly-413, 477-479 (NAA), and Asp-493 contribute to the ATP site.

This sequence belongs to the chaperonin (HSP60) family. As to quaternary structure, forms a cylinder of 14 subunits composed of two heptameric rings stacked back-to-back. Interacts with the co-chaperonin GroES.

It is found in the cytoplasm. The catalysed reaction is ATP + H2O + a folded polypeptide = ADP + phosphate + an unfolded polypeptide.. Functionally, together with its co-chaperonin GroES, plays an essential role in assisting protein folding. The GroEL-GroES system forms a nano-cage that allows encapsulation of the non-native substrate proteins and provides a physical environment optimized to promote and accelerate protein folding. This Clavibacter michiganensis subsp. michiganensis (strain NCPPB 382) protein is Chaperonin GroEL.